We begin with the raw amino-acid sequence, 825 residues long: Breast cancer anti-estrogen resistance protein 3 (825 aa).

N-acetylalanine is present on Ala-2. Residues Ser-32, Ser-78, and Ser-83 each carry the phosphoserine modification. Residues 40-106 (DAYQDVSIHG…DRHGETFTFR (67 aa)) form a disordered region. Positions 79-94 (PRQNSPVTQDGIQESP) are enriched in polar residues. The span at 95–106 (WQDRHGETFTFR) shows a compositional bias: basic and acidic residues. One can recognise an SH2 domain in the interval 154–253 (WYHGRIPRQV…QSGAIIFQPI (100 aa)). A phosphoserine mark is found at Ser-182 and Ser-290. The residue at position 334 (Lys-334) is an N6-methyllysine. 3 positions are modified to phosphoserine: Ser-358, Ser-363, and Ser-375. Arg-442 carries the omega-N-methylarginine modification. Ser-471 carries the post-translational modification Phosphoserine. A Ras-GEF domain is found at 548–818 (DPKVIAQHVL…TALSRKLEPP (271 aa)). A mediates the interaction with BCAR1/p130CAS region spans residues 744–748 (LATAR).

Part of a complex comprised of PTPRA, BCAR1, BCAR3 (via SH2 domain) and SRC; the formation of the complex is dependent on integrin mediated-tyrosine phosphorylation of PTPRA. Within the complex, interacts (via SH2 domain) with PTPRA (when phosphorylated on 'Tyr-798'). Interacts (via Ras-GEF domain) with BCAR1. Interacts (via Ras-GEF domain) with NEDD9. Interacts with PTK2/FAK1. Interacts with PTPN1. Interacts (via SH2 domain) with EGFR (when tyrosine-phosphorylated). Phosphorylated on tyrosine residues. As to expression, ubiquitously expressed. Found in several cancer cell lines, but not in nonmalignant breast tissue.

Its subcellular location is the cytoplasm. It is found in the cell junction. It localises to the focal adhesion. Its function is as follows. Acts as an adapter protein downstream of several growth factor receptors to promote cell proliferation, migration, and redistribution of actin fibers. Specifically involved in INS/insulin signaling pathway by mediating MAPK1/ERK2-MAPK3/ERK1 activation and DNA synthesis. Promotes insulin-mediated membrane ruffling. In response to vasoconstrictor peptide EDN1, involved in the activation of RAP1 downstream of PTK2B via interaction with phosphorylated BCAR1. Inhibits cell migration and invasion via regulation of TGFB-mediated matrix digestion, actin filament rearrangement, and inhibition of invadopodia activity. May inhibit TGFB-SMAD signaling, via facilitating BCAR1 and SMAD2 and/or SMAD3 interaction. Regulates EGF-induced DNA synthesis. Required for the maintenance of ocular lens morphology and structural integrity, potentially via regulation of focal adhesion complex signaling. Acts upstream of PTPRA to regulate the localization of BCAR1 and PTPRA to focal adhesions, via regulation of SRC-mediated phosphorylation of PTPRA. Positively regulates integrin-induced tyrosine phosphorylation of BCAR1. Acts as a guanine nucleotide exchange factor (GEF) for small GTPases RALA, RAP1A and RRAS. However, in a contrasting study, lacks GEF activity towards RAP1. The chain is Breast cancer anti-estrogen resistance protein 3 (BCAR3) from Homo sapiens (Human).